Reading from the N-terminus, the 440-residue chain is D-serine dehydratase (440 aa).

The residue at position 116 (lysine 116) is an N6-(pyridoxal phosphate)lysine.

The protein belongs to the serine/threonine dehydratase family. DsdA subfamily. In terms of assembly, monomer. Requires pyridoxal 5'-phosphate as cofactor.

It carries out the reaction D-serine = pyruvate + NH4(+). The protein is D-serine dehydratase of Salmonella typhi.